Consider the following 1090-residue polypeptide: MLTIVRGPVGSGKSRYCREEIIKVLKEAPLGPMVLYIVPESATFENEYLLNTREDLPGSFRLQVLSFSRLALNVVREFKAFFKNSSEFVYQHTLKKILQENKGKLQILQKAADNPGFIEDLLKLFKEFRRYRVKPENLEKASSEIENWMLQQKLKDVYLLYKLYLEKFGEEYTSEGLLEKFLEYAPKSKFLAGAKVFIDGFYTFTPLELEVIKTLLKTCAEVTVTLPTEYDPGIFNRLYSEALNLGIKVKELKLEKIERYRASELLHLAQNYYPLLPDPYSGSLENLSLIAAANPLEEMEKAARIIRYLAKFKGYKLSDILVLIPEDGYYISNIKTVFNEYGLPVYVDKGLAFDHHGLYFLLKGVLGEFNREAAINCLKSGLLNLTADEVFALENYLLSRGLDGEKLVLKEAWEDPNSSYWESWEKGFGEIISFSQILPLINTYREFSQSLKQLLLKIGVPRRISDENGERFWQAFTNLLTEIEEVFGAERLNPTTFAEELLAYLAKLSLKTIPKGLDQVRAGGSKRYWTGEARAVIILGAVEGKFPSPPAAGLIFTEEERAKLKKVGLELSPLIRQRLKEDNFHVFLALTRARERVYVSYPRVSLTGESFTPALLVDWLKKAFPNLKSEEGSYGNETTPQALTRLLSREMVKVKKNGELPFIAQGAFNALLLSKPELITKIARAFATNPGKIKLNAGFKEFLPSKTLSVSRLETYYSCPLKYFLKYLIKAEEREIFTPEATEIGALLHGAVAEIIKTVREKGQKLSTLLAEDLKTLVYQAFTKAQQEYGEKFLATYRGRYFLNRLYLMLFKAIEALAYFEGFTKFTPFGEEIAFGEKERLKSPVFEVNGEKYTLAGKIDRIDVYENNGKTYLRIIDYKTGSISISLDEVVGGINLQLLTYLLVASENKELFGENLVPAGAFYFRFQNPMLDEKAEGLSMEELKEEVYKNFRLSGYALKDEESLKHLDSFYAQNNKFKTVNLRTYKDGRIDNALTPAELEALFTKIKGLITEAIFKISAGEFSAIPYQLKDATGCRYCSYLEVCRLEEQEKQYRVIPRKKDPEVLLALSGGGVGDEKLDSRTNAGYHLQG.

ATP is bound at residue 7–14; the sequence is GPVGSGKS. [4Fe-4S] cluster contacts are provided by Cys-719, Cys-1035, Cys-1038, and Cys-1044.

Belongs to the helicase family. AddB/RexB type 1 subfamily. In terms of assembly, heterodimer of AddA and AddB. Mg(2+) is required as a cofactor. The cofactor is [4Fe-4S] cluster.

Functionally, the heterodimer acts as both an ATP-dependent DNA helicase and an ATP-dependent, dual-direction single-stranded exonuclease. Recognizes the chi site generating a DNA molecule suitable for the initiation of homologous recombination. The AddB subunit has 5' -&gt; 3' nuclease activity but not helicase activity. The polypeptide is ATP-dependent helicase/deoxyribonuclease subunit B (Carboxydothermus hydrogenoformans (strain ATCC BAA-161 / DSM 6008 / Z-2901)).